Reading from the N-terminus, the 761-residue chain is Ribonucleoside-diphosphate reductase 1 subunit alpha (761 aa).

The ATP-cone domain maps to 5-95 (LLVTKRDGRT…IFHLRKKAFG (91 aa)). ATP-binding positions include Lys9, 15–21 (ERINLDK), Thr55, and Lys91. Thr209 provides a ligand contact to GDP. Residues Cys225 and Cys462 are joined by a disulfide bond. Residues 232 to 234 (DSL), Arg262, and Arg269 contribute to the dTTP site. GDP is bound at residue Asn437. Residue Asn437 is the Proton acceptor of the active site. Residue Cys439 is the Cysteine radical intermediate of the active site. Residues Glu441 and 623 to 625 (ETS) contribute to the GDP site. The active-site Proton acceptor is Glu441.

This sequence belongs to the ribonucleoside diphosphate reductase large chain family. Tetramer of two alpha (R1) and two beta (R2) subunits. The B1 protein is a dimer of alpha subunits. A radical transfer pathway occurs between 'Tyr-122' of R2 and R1.

It catalyses the reaction a 2'-deoxyribonucleoside 5'-diphosphate + [thioredoxin]-disulfide + H2O = a ribonucleoside 5'-diphosphate + [thioredoxin]-dithiol. Its activity is regulated as follows. Under complex allosteric control mediated by deoxynucleoside triphosphates and ATP binding to separate specificity and activation sites on the alpha subunit. The type of nucleotide bound at the specificity site determines substrate preference. It seems probable that ATP makes the enzyme reduce CDP and UDP, dGTP favors ADP reduction and dTTP favors GDP reduction. Stimulated by ATP and inhibited by dATP binding to the activity site. In terms of biological role, provides the precursors necessary for DNA synthesis. Catalyzes the biosynthesis of deoxyribonucleotides from the corresponding ribonucleotides. R1 contains the binding sites for both substrates and allosteric effectors and carries out the actual reduction of the ribonucleotide. The protein is Ribonucleoside-diphosphate reductase 1 subunit alpha (nrdA) of Salmonella typhimurium (strain LT2 / SGSC1412 / ATCC 700720).